A 209-amino-acid chain; its full sequence is Uracil phosphoribosyltransferase (209 aa).

Residues arginine 79, arginine 104, and 131–139 (DPMLATGGS) contribute to the 5-phospho-alpha-D-ribose 1-diphosphate site. Uracil-binding positions include isoleucine 194 and 199 to 201 (GDA). Aspartate 200 provides a ligand contact to 5-phospho-alpha-D-ribose 1-diphosphate.

It belongs to the UPRTase family. Mg(2+) is required as a cofactor.

It carries out the reaction UMP + diphosphate = 5-phospho-alpha-D-ribose 1-diphosphate + uracil. The protein operates within pyrimidine metabolism; UMP biosynthesis via salvage pathway; UMP from uracil: step 1/1. With respect to regulation, allosterically activated by GTP. In terms of biological role, catalyzes the conversion of uracil and 5-phospho-alpha-D-ribose 1-diphosphate (PRPP) to UMP and diphosphate. This is Uracil phosphoribosyltransferase from Bacillus velezensis (strain DSM 23117 / BGSC 10A6 / LMG 26770 / FZB42) (Bacillus amyloliquefaciens subsp. plantarum).